Here is a 410-residue protein sequence, read N- to C-terminus: Histidine--tRNA ligase (410 aa).

The protein belongs to the class-II aminoacyl-tRNA synthetase family.

Its subcellular location is the cytoplasm. The enzyme catalyses tRNA(His) + L-histidine + ATP = L-histidyl-tRNA(His) + AMP + diphosphate + H(+). In Methanoculleus marisnigri (strain ATCC 35101 / DSM 1498 / JR1), this protein is Histidine--tRNA ligase.